Consider the following 323-residue polypeptide: Low affinity immunoglobulin gamma Fc region receptor II-c (323 aa).

A signal peptide spans 1–42 (MGILSFLPVLATESDWADCKSPQPWGHMLLWTAVLFLAPVAG). Residues 43 to 223 (TPAAPPKAVL…VQAPSSSPMG (181 aa)) lie on the Extracellular side of the membrane. 2 consecutive Ig-like C2-type domains span residues 48 to 127 (PKAV…VHLT) and 131 to 213 (EWLV…VTIT). Intrachain disulfides connect cysteine 71-cysteine 113 and cysteine 152-cysteine 196. N-linked (GlcNAc...) asparagine glycosylation is found at asparagine 106, asparagine 180, and asparagine 187. A helical transmembrane segment spans residues 224–246 (IIVAVVTGIAVAAIVAAVVALIY). Topologically, residues 247–323 (CRKKRISANS…PPNDHVNSNN (77 aa)) are cytoplasmic. Residues 277 to 323 (KRQPEETNNDYETADGGYMTLNPRAPTDDDKNIYLTLPPNDHVNSNN) form a disordered region. 2 positions are modified to phosphotyrosine; by SRC-type Tyr-kinases: tyrosine 294 and tyrosine 310.

Phosphorylated by SRC-type Tyr-kinases such as LYN, BLK, FYN and SYK. In terms of tissue distribution, isoform IIC1 is detected in monocytes, macrophages, polymorphonuclear cells and natural killer cells.

Its subcellular location is the cytoplasm. It localises to the cell membrane. Its function is as follows. Receptor for the Fc region of complexed immunoglobulins gamma. Low affinity receptor. Involved in a variety of effector and regulatory functions such as phagocytosis of immune complexes and modulation of antibody production by B-cells. This Homo sapiens (Human) protein is Low affinity immunoglobulin gamma Fc region receptor II-c (FCGR2C).